Here is a 330-residue protein sequence, read N- to C-terminus: Anthranilate phosphoribosyltransferase (330 aa).

Residues G75, G78–D79, T83, N85–T88, K103–S111, and A115 each bind 5-phospho-alpha-D-ribose 1-diphosphate. G75 serves as a coordination point for anthranilate. Mg(2+) is bound at residue S87. N106 serves as a coordination point for anthranilate. R161 contacts anthranilate. D220 and E221 together coordinate Mg(2+).

Belongs to the anthranilate phosphoribosyltransferase family. In terms of assembly, homodimer. The cofactor is Mg(2+).

It catalyses the reaction N-(5-phospho-beta-D-ribosyl)anthranilate + diphosphate = 5-phospho-alpha-D-ribose 1-diphosphate + anthranilate. It functions in the pathway amino-acid biosynthesis; L-tryptophan biosynthesis; L-tryptophan from chorismate: step 2/5. In terms of biological role, catalyzes the transfer of the phosphoribosyl group of 5-phosphorylribose-1-pyrophosphate (PRPP) to anthranilate to yield N-(5'-phosphoribosyl)-anthranilate (PRA). In Novosphingobium aromaticivorans (strain ATCC 700278 / DSM 12444 / CCUG 56034 / CIP 105152 / NBRC 16084 / F199), this protein is Anthranilate phosphoribosyltransferase.